A 319-amino-acid polypeptide reads, in one-letter code: ATP-dependent 6-phosphofructokinase (319 aa).

ATP is bound at residue Gly-11. 21–25 serves as a coordination point for ADP; that stretch reads RAVVR. Residues 72–73 and 102–105 each bind ATP; these read RC and GDGS. A Mg(2+)-binding site is contributed by Asp-103. 125-127 lines the substrate pocket; sequence TID. The Proton acceptor role is filled by Asp-127. Arg-154 contacts ADP. Residues Arg-162 and 169–171 contribute to the substrate site; that span reads MGR. ADP-binding positions include 185-187, Arg-211, and 213-215; these read GAE and KKH. Substrate is bound by residues Glu-222, Arg-243, and 249–252; that span reads HVQR.

Belongs to the phosphofructokinase type A (PFKA) family. ATP-dependent PFK group I subfamily. Prokaryotic clade 'B1' sub-subfamily. As to quaternary structure, homotetramer. The cofactor is Mg(2+).

The protein localises to the cytoplasm. It catalyses the reaction beta-D-fructose 6-phosphate + ATP = beta-D-fructose 1,6-bisphosphate + ADP + H(+). The protein operates within carbohydrate degradation; glycolysis; D-glyceraldehyde 3-phosphate and glycerone phosphate from D-glucose: step 3/4. Allosterically activated by ADP and other diphosphonucleosides, and allosterically inhibited by phosphoenolpyruvate. Catalyzes the phosphorylation of D-fructose 6-phosphate to fructose 1,6-bisphosphate by ATP, the first committing step of glycolysis. The chain is ATP-dependent 6-phosphofructokinase from Bacillus mycoides (strain KBAB4) (Bacillus weihenstephanensis).